The primary structure comprises 934 residues: Protocadherin gamma-C3 (934 aa).

The first 31 residues, 1 to 31 (MVPEAWRSGLVSTGRVVGVLLLLGALNKAST), serve as a signal peptide directing secretion. Cadherin domains lie at 32–135 (VIHY…NPAF), 136–244 (PTQE…APVF), 245–352 (NQSL…APEI), 353–457 (TVTS…PPQS), 458–567 (SQSS…APQV), and 572–685 (PGGS…APRE). The Extracellular segment spans residues 32–693 (VIHYEIPEER…REQKKNLTFY (662 aa)). 6 N-linked (GlcNAc...) asparagine glycosylation sites follow: Asn245, Asn424, Asn478, Asn550, Asn615, and Asn689. Residues 694-714 (LLLSLILVSVGFVVTVFGVII) form a helical membrane-spanning segment. At 715–934 (FKVYKWKQSR…KKKSGKKEKK (220 aa)) the chain is on the cytoplasmic side. 2 disordered regions span residues 804–843 (ESAP…WPNN) and 904–934 (ATLT…KEKK). The span at 812–843 (APPNTDWRFSQAQRPGTSGSQNGDDTGTWPNN) shows a compositional bias: polar residues. Positions 924 to 934 (NKKKSGKKEKK) are enriched in basic residues.

It is found in the cell membrane. Functionally, potential calcium-dependent cell-adhesion protein. May be involved in the establishment and maintenance of specific neuronal connections in the brain. The protein is Protocadherin gamma-C3 (PCDHGC3) of Homo sapiens (Human).